The primary structure comprises 388 residues: Tumor protein p53-inducible protein 13 (388 aa).

The first 27 residues, methionine 1–alanine 27, serve as a signal peptide directing secretion. Residues glutamate 28–glutamate 304 lie on the Extracellular side of the membrane. Residues alanine 305 to cysteine 325 traverse the membrane as a helical segment. Residues threonine 326–aspartate 388 are Cytoplasmic-facing. Over residues proline 361–proline 372 the composition is skewed to basic residues. Positions proline 361 to aspartate 388 are disordered.

The protein localises to the cell membrane. Its subcellular location is the cytoplasm. In terms of biological role, may act as a tumor suppressor. Inhibits tumor cell growth, when overexpressed. This chain is Tumor protein p53-inducible protein 13 (Tp53i13), found in Rattus norvegicus (Rat).